Consider the following 326-residue polypeptide: tRNA-modifying protein YgfZ (326 aa).

Trp27 and Trp189 together coordinate folate.

It belongs to the tRNA-modifying YgfZ family.

Its subcellular location is the cytoplasm. In terms of biological role, folate-binding protein involved in regulating the level of ATP-DnaA and in the modification of some tRNAs. It is probably a key factor in regulatory networks that act via tRNA modification, such as initiation of chromosomal replication. The polypeptide is tRNA-modifying protein YgfZ (Salmonella arizonae (strain ATCC BAA-731 / CDC346-86 / RSK2980)).